The following is a 255-amino-acid chain: Adenosylcobinamide-GDP ribazoletransferase (255 aa).

6 helical membrane passes run 43–63 (LVGT…SLFF), 64–84 (PYQV…GAFH), 113–133 (IGTY…VFLT), 141–161 (FGLM…TLIY), 195–215 (LAAI…AILF), and 234–254 (CLGG…IAVV).

Belongs to the CobS family. The cofactor is Mg(2+).

Its subcellular location is the cell inner membrane. The enzyme catalyses alpha-ribazole + adenosylcob(III)inamide-GDP = adenosylcob(III)alamin + GMP + H(+). The catalysed reaction is alpha-ribazole 5'-phosphate + adenosylcob(III)inamide-GDP = adenosylcob(III)alamin 5'-phosphate + GMP + H(+). The protein operates within cofactor biosynthesis; adenosylcobalamin biosynthesis; adenosylcobalamin from cob(II)yrinate a,c-diamide: step 7/7. Functionally, joins adenosylcobinamide-GDP and alpha-ribazole to generate adenosylcobalamin (Ado-cobalamin). Also synthesizes adenosylcobalamin 5'-phosphate from adenosylcobinamide-GDP and alpha-ribazole 5'-phosphate. The chain is Adenosylcobinamide-GDP ribazoletransferase from Vibrio vulnificus (strain CMCP6).